The sequence spans 24 residues: Citropin-3.1.2 (24 aa).

In terms of tissue distribution, expressed by the dorsal and submental skin glands.

It localises to the secreted. The polypeptide is Citropin-3.1.2 (Ranoidea citropa (Australian Blue Mountains tree frog)).